We begin with the raw amino-acid sequence, 63 residues long: Large ribosomal subunit protein uL30 (63 aa).

This sequence belongs to the universal ribosomal protein uL30 family. Part of the 50S ribosomal subunit.

The sequence is that of Large ribosomal subunit protein uL30 from Xylella fastidiosa (strain M23).